The primary structure comprises 677 residues: Methionine--tRNA ligase (677 aa).

The 'HIGH' region motif lies at 15–25; that stretch reads PYANGSIHLGH. Positions 146, 149, 159, and 162 each coordinate Zn(2+). A 'KMSKS' region motif is present at residues 333–337; the sequence is KMSKS. Residue lysine 336 coordinates ATP. The tRNA-binding domain maps to 575-677; sequence DFAKVDLRVA…AGAKPGHQVK (103 aa).

The protein belongs to the class-I aminoacyl-tRNA synthetase family. MetG type 1 subfamily. As to quaternary structure, homodimer. Zn(2+) serves as cofactor.

Its subcellular location is the cytoplasm. It catalyses the reaction tRNA(Met) + L-methionine + ATP = L-methionyl-tRNA(Met) + AMP + diphosphate. In terms of biological role, is required not only for elongation of protein synthesis but also for the initiation of all mRNA translation through initiator tRNA(fMet) aminoacylation. The protein is Methionine--tRNA ligase of Escherichia coli (strain SE11).